The sequence spans 474 residues: Catalase (474 aa).

Catalysis depends on residues H52 and N124. A heme-binding site is contributed by Y334.

It belongs to the catalase family. It depends on heme as a cofactor.

It carries out the reaction 2 H2O2 = O2 + 2 H2O. In terms of biological role, decomposes hydrogen peroxide into water and oxygen; serves to protect cells from the toxic effects of hydrogen peroxide. The protein is Catalase (katA) of Campylobacter jejuni subsp. jejuni serotype O:2 (strain ATCC 700819 / NCTC 11168).